We begin with the raw amino-acid sequence, 37 residues long: Photosystem I reaction center subunit IX (37 aa).

A helical membrane pass occupies residues 4-24 (FLSSAPVLLTAMMVFTAGLLI).

It belongs to the PsaJ family.

It localises to the cellular thylakoid membrane. Functionally, may help in the organization of the PsaE and PsaF subunits. The polypeptide is Photosystem I reaction center subunit IX (Picosynechococcus sp. (strain ATCC 27264 / PCC 7002 / PR-6) (Agmenellum quadruplicatum)).